The following is a 148-amino-acid chain: D-aminoacyl-tRNA deacylase (148 aa).

Positions 137 to 138 (GP) match the Gly-cisPro motif, important for rejection of L-amino acids motif.

The protein belongs to the DTD family. Homodimer.

It localises to the cytoplasm. It carries out the reaction glycyl-tRNA(Ala) + H2O = tRNA(Ala) + glycine + H(+). The catalysed reaction is a D-aminoacyl-tRNA + H2O = a tRNA + a D-alpha-amino acid + H(+). An aminoacyl-tRNA editing enzyme that deacylates mischarged D-aminoacyl-tRNAs. Also deacylates mischarged glycyl-tRNA(Ala), protecting cells against glycine mischarging by AlaRS. Acts via tRNA-based rather than protein-based catalysis; rejects L-amino acids rather than detecting D-amino acids in the active site. By recycling D-aminoacyl-tRNA to D-amino acids and free tRNA molecules, this enzyme counteracts the toxicity associated with the formation of D-aminoacyl-tRNA entities in vivo and helps enforce protein L-homochirality. In Lactiplantibacillus plantarum (strain ATCC BAA-793 / NCIMB 8826 / WCFS1) (Lactobacillus plantarum), this protein is D-aminoacyl-tRNA deacylase.